The primary structure comprises 316 residues: Methionyl-tRNA formyltransferase (316 aa).

112-115 (SLLP) contacts (6S)-5,6,7,8-tetrahydrofolate.

The protein belongs to the Fmt family.

It catalyses the reaction L-methionyl-tRNA(fMet) + (6R)-10-formyltetrahydrofolate = N-formyl-L-methionyl-tRNA(fMet) + (6S)-5,6,7,8-tetrahydrofolate + H(+). Attaches a formyl group to the free amino group of methionyl-tRNA(fMet). The formyl group appears to play a dual role in the initiator identity of N-formylmethionyl-tRNA by promoting its recognition by IF2 and preventing the misappropriation of this tRNA by the elongation apparatus. This is Methionyl-tRNA formyltransferase from Flavobacterium psychrophilum (strain ATCC 49511 / DSM 21280 / CIP 103535 / JIP02/86).